The following is a 218-amino-acid chain: Protein-L-isoaspartate O-methyltransferase (218 aa).

Serine 52 is an active-site residue.

The protein belongs to the methyltransferase superfamily. L-isoaspartyl/D-aspartyl protein methyltransferase family.

It is found in the cytoplasm. It carries out the reaction [protein]-L-isoaspartate + S-adenosyl-L-methionine = [protein]-L-isoaspartate alpha-methyl ester + S-adenosyl-L-homocysteine. Its function is as follows. Catalyzes the methyl esterification of L-isoaspartyl residues in peptides and proteins that result from spontaneous decomposition of normal L-aspartyl and L-asparaginyl residues. It plays a role in the repair and/or degradation of damaged proteins. The chain is Protein-L-isoaspartate O-methyltransferase from Rhodopseudomonas palustris (strain ATCC BAA-98 / CGA009).